We begin with the raw amino-acid sequence, 213 residues long: Proteasome subunit beta (213 aa).

Residues 1–11 constitute a propeptide, removed in mature form; by autocatalysis; sequence MSMIEEKIYKG. Thr12 functions as the Nucleophile in the catalytic mechanism.

It belongs to the peptidase T1B family. As to quaternary structure, the 20S proteasome core is composed of 14 alpha and 14 beta subunits that assemble into four stacked heptameric rings, resulting in a barrel-shaped structure. The two inner rings, each composed of seven catalytic beta subunits, are sandwiched by two outer rings, each composed of seven alpha subunits. The catalytic chamber with the active sites is on the inside of the barrel. Has probably a gated structure, the ends of the cylinder being occluded by the N-termini of the alpha-subunits. Is likely capped at one or both ends by the proteasome regulatory ATPase, PAN.

The protein resides in the cytoplasm. The catalysed reaction is Cleavage of peptide bonds with very broad specificity.. The formation of the proteasomal ATPase PAN-20S proteasome complex, via the docking of the C-termini of PAN into the intersubunit pockets in the alpha-rings, triggers opening of the gate for substrate entry. Interconversion between the open-gate and close-gate conformations leads to a dynamic regulation of the 20S proteasome proteolysis activity. Its function is as follows. Component of the proteasome core, a large protease complex with broad specificity involved in protein degradation. This Archaeoglobus fulgidus (strain ATCC 49558 / DSM 4304 / JCM 9628 / NBRC 100126 / VC-16) protein is Proteasome subunit beta.